A 624-amino-acid polypeptide reads, in one-letter code: MRTFLSSFIILTTFLASLIAAETHTWYFKTGWVDANPDGVYPRKMIGFNDSWPLPTLRVKKGDRVQLYLINGFDNLNTTLHFHGLFVRGANQMDGPEMVTQCPIPPGETYLYNFTVTDQVGTYWYHSHTGGQYGDGMRGVFIIEDDDFPYHYDEEVVLTLSDHYHKYSGDIGPAFLTRFNPTGAEPIPQNFLFNETRNATWKVEPGKTYFVRILNVGGFVSQYLWMEDHEFTIVEIDGVYVEKNTTDLIYITVAQRYGVLITTKNSTDKNYVFMNGVDTTMLDSVPADLQVNGTNYIVYNESSALPDAYDIDSYDDALDDFYLKPLSKQKLMDDADYTITVDVQMNVLNDGINYAFFNNISYKAPKVPTLLTVLSAGEAATNELIYGTNTNSFVLQGGDIVDIVLNNFDTGKHPFHLHGHVFQLIERHEAIGSKESAVTFNVSDHAEWPEYPMIRDTVYVKPHSYMVLRFKADNPVVWFFHCHVDWHLEQGLAVVLIEDPQAIQKNEKITENHKRICEKVGVPWEGNAAANSNDYLDLKGENVQVKRLPTGFTTKGIVALVFSCVAAFLGLFSFSFYGMNDIAHVEDKVARDLDIDLEAENEDEEEAVVLNQNSSSSDSNSKPH.

Positions 1–20 are cleaved as a signal peptide; it reads MRTFLSSFIILTTFLASLIA. The Extracellular portion of the chain corresponds to 21–555; sequence AETHTWYFKT…KRLPTGFTTK (535 aa). 2 Plastocyanin-like domains span residues 46–144 and 190–292; these read IGFN…FIIE and NFLF…LQVN. N49 and N77 each carry an N-linked (GlcNAc...) asparagine glycan. Positions 81 and 83 each coordinate Cu cation. An N-linked (GlcNAc...) asparagine glycan is attached at N113. Positions 126 and 128 each coordinate Cu cation. N-linked (GlcNAc...) asparagine glycosylation is found at N194, N198, N244, N265, N292, N300, and N359. The 118-residue stretch at 382-499 folds into the Plastocyanin-like 3 domain; the sequence is NELIYGTNTN…QGLAVVLIED (118 aa). The Cu cation site is built by H413, H416, and H418. An N-linked (GlcNAc...) asparagine glycan is attached at N441. 4 residues coordinate Cu cation: H481, C482, H483, and H487. The helical transmembrane segment at 556–576 threads the bilayer; it reads GIVALVFSCVAAFLGLFSFSF. The Cytoplasmic segment spans residues 577–624; that stretch reads YGMNDIAHVEDKVARDLDIDLEAENEDEEEAVVLNQNSSSSDSNSKPH. The segment at 603 to 624 is disordered; sequence DEEEAVVLNQNSSSSDSNSKPH. Low complexity predominate over residues 608 to 624; sequence VVLNQNSSSSDSNSKPH.

This sequence belongs to the multicopper oxidase family. It depends on Cu cation as a cofactor.

Its subcellular location is the cell membrane. In terms of biological role, iron transport multicopper ferroxidase required for Fe(2+) high affinity uptake. Required to oxidize Fe(2+) and release it from the transporter. Essential component of copper-dependent iron transport. The sequence is that of Iron transport multicopper oxidase FET3 (FET3) from Candida albicans (Yeast).